We begin with the raw amino-acid sequence, 386 residues long: S-adenosylmethionine synthase (386 aa).

Mg(2+) is bound at residue glutamate 8. Histidine 14 is an ATP binding site. Glutamate 42 contacts K(+). Glutamate 55 and glutamine 98 together coordinate L-methionine. Residues 166–168, 234–237, aspartate 245, 251–252, alanine 268, lysine 272, and lysine 276 contribute to the ATP site; these read DGK, SGRF, and RK. Aspartate 245 lines the L-methionine pocket. Lysine 276 provides a ligand contact to L-methionine.

The protein belongs to the AdoMet synthase family. In terms of assembly, homotetramer. Requires Mn(2+) as cofactor. Mg(2+) is required as a cofactor. Co(2+) serves as cofactor. It depends on K(+) as a cofactor.

The protein localises to the cytoplasm. It carries out the reaction L-methionine + ATP + H2O = S-adenosyl-L-methionine + phosphate + diphosphate. Its pathway is amino-acid biosynthesis; S-adenosyl-L-methionine biosynthesis; S-adenosyl-L-methionine from L-methionine: step 1/1. Its function is as follows. Catalyzes the formation of S-adenosylmethionine from methionine and ATP. The reaction comprises two steps that are both catalyzed by the same enzyme: formation of S-adenosylmethionine (AdoMet) and triphosphate, and subsequent hydrolysis of the triphosphate. This chain is S-adenosylmethionine synthase (METK), found in Ostreococcus tauri.